Consider the following 124-residue polypeptide: Fluoride-specific ion channel FluC (124 aa).

4 consecutive transmembrane segments (helical) span residues V5–V25, S32–M52, F67–T87, and L96–I116. G75 and T78 together coordinate Na(+).

Belongs to the fluoride channel Fluc/FEX (TC 1.A.43) family.

Its subcellular location is the cell inner membrane. The enzyme catalyses fluoride(in) = fluoride(out). With respect to regulation, na(+) is not transported, but it plays an essential structural role and its presence is essential for fluoride channel function. Functionally, fluoride-specific ion channel. Important for reducing fluoride concentration in the cell, thus reducing its toxicity. The sequence is that of Fluoride-specific ion channel FluC from Geobacter sp. (strain M21).